Here is a 318-residue protein sequence, read N- to C-terminus: ZAR1-like protein (318 aa).

The disordered stretch occupies residues 149 to 211 (LSDPPEAGQP…PVDSSQPLGR (63 aa)). A compositionally biased stretch (pro residues) spans 155–169 (AGQPPPPLPPPSPPP). Residues 219-304 (PKYGYFHCKD…QELCGRCKDK (86 aa)) form a 3CxxC-type zinc finger.

Belongs to the ZAR1 family. As to quaternary structure, interacts with YBX2.

Its subcellular location is the cytoplasm. It localises to the cytoplasmic ribonucleoprotein granule. MRNA-binding protein required for maternal mRNA storage, translation and degradation during oocyte maturation. Probably promotes formation of some phase-separated membraneless compartment that stores maternal mRNAs in oocytes: acts by undergoing liquid-liquid phase separation upon binding to maternal mRNAs. Binds to the 3'-UTR of maternal mRNAs, inhibiting their translation. The protein is ZAR1-like protein (ZAR1L) of Bos taurus (Bovine).